A 241-amino-acid chain; its full sequence is MPRCNNRAPAQMRPVRIIRHYVRHAEGSVLIEYGETRVICTASVIEKVPPFLKGAGQGWLTAEYGMLPRSTGERMQREAAKGKQSGRTMEIQRLIGRALRSILDLEKLGERTIQMDCDVIQADGGTRTASITGAFVALYDAIDYLRAERMISQNPIRDHVAAVSVGILKGQPLLDLDYLEDSGCDTDLNVVMTGSLGLVEVQGTAEKVVFSRQELDVMLNMAQQGLQELFDVQRKALETVA.

Residues R87 and 125-127 contribute to the phosphate site; that span reads GTR.

Belongs to the RNase PH family. In terms of assembly, homohexameric ring arranged as a trimer of dimers.

The enzyme catalyses tRNA(n+1) + phosphate = tRNA(n) + a ribonucleoside 5'-diphosphate. Its function is as follows. Phosphorolytic 3'-5' exoribonuclease that plays an important role in tRNA 3'-end maturation. Removes nucleotide residues following the 3'-CCA terminus of tRNAs; can also add nucleotides to the ends of RNA molecules by using nucleoside diphosphates as substrates, but this may not be physiologically important. Probably plays a role in initiation of 16S rRNA degradation (leading to ribosome degradation) during starvation. The polypeptide is Ribonuclease PH (Nitrosomonas europaea (strain ATCC 19718 / CIP 103999 / KCTC 2705 / NBRC 14298)).